We begin with the raw amino-acid sequence, 214 residues long: Cutinase CUT2 (214 aa).

An N-terminal signal peptide occupies residues Met-1–Ala-18. Cys-40 and Cys-117 are disulfide-bonded. The active-site Nucleophile is Ser-128. An intrachain disulfide couples Cys-179 to Cys-186. The active site involves Asp-183. Catalysis depends on His-196, which acts as the Proton donor/acceptor.

It belongs to the cutinase family. The 2 disulfide bonds play a critical role in holding the catalytic residues in juxta-position; reduction of the disulfide bridges results in the complete inactivation of the enzyme.

The protein localises to the secreted. The catalysed reaction is cutin + H2O = cutin monomers.. In terms of biological role, catalyzes the hydrolysis of complex carboxylic polyesters found in the cell wall of plants. Degrades cutin, a macromolecule that forms the structure of the plant cuticle. Required for efficient penetration of the host plant cuticle by the appressorium during the initial stage of fungal infection. The protein is Cutinase CUT2 of Pyricularia oryzae (strain 70-15 / ATCC MYA-4617 / FGSC 8958) (Rice blast fungus).